Consider the following 391-residue polypeptide: Cathepsin E (391 aa).

The first 19 residues, 1–19 (MKTFLLLLLVLLELGQAPG), serve as a signal peptide directing secretion. A propeptide spans 20 to 53 (ALHRVPLSRRESLRKKLRAQGQLTELWKSQNLNM) (activation peptide). Residues 74–387 (YFGTISIGSP…DRGNNRVGLA (314 aa)) form the Peptidase A1 domain. N-linked (GlcNAc...) asparagine glycosylation occurs at Asn86. Residue Asp92 is part of the active site. Disulfide bonds link Cys105/Cys110 and Cys267/Cys271. Asp276 is an active-site residue. Residues Cys309 and Cys346 are joined by a disulfide bond.

Belongs to the peptidase A1 family. Homodimer; disulfide-linked. Glycosylated. The nature of the carbohydrate chain varies between cell types. In terms of tissue distribution, expressed abundantly in the surface and foveolar epithelial cells of the fundic and pyloric stomach mucosa, and at very low levels in the spleen.

Its subcellular location is the endosome. The catalysed reaction is Similar to cathepsin D, but slightly broader specificity.. In terms of biological role, may have a role in immune function. Probably involved in the processing of antigenic peptides during MHC class II-mediated antigen presentation. May play a role in activation-induced lymphocyte depletion in the thymus, and in neuronal degeneration and glial cell activation in the brain. This Cavia porcellus (Guinea pig) protein is Cathepsin E (CTSE).